A 919-amino-acid polypeptide reads, in one-letter code: TRPM8 channel-associated factor 2 (919 aa).

The Peptidase M60 domain maps to 542–841; the sequence is DCWVSTGLYL…TYLQLQEAFG (300 aa).

Belongs to the TCAF family. As to quaternary structure, isoform 2 interacts with TRPM8 (via N-terminus and C-terminus domains); the interaction inhibits TRPM8 channel activity. Interacts with TRPV6. Isoform 2 is expressed in the prostate and in cancerous prostate samples.

The protein resides in the cell membrane. In terms of biological role, negatively regulates the plasma membrane cation channel TRPM8 activity. Involved in the recruitment of TRPM8 to the cell surface. Promotes prostate cancer cell migration stimulation in a TRPM8-dependent manner. The polypeptide is TRPM8 channel-associated factor 2 (Homo sapiens (Human)).